We begin with the raw amino-acid sequence, 426 residues long: D-tagatose-1,6-bisphosphate aldolase subunit KbaZ (426 aa).

This sequence belongs to the GatZ/KbaZ family. KbaZ subfamily. As to quaternary structure, forms a complex with KbaY.

It participates in carbohydrate metabolism; D-tagatose 6-phosphate degradation; D-glyceraldehyde 3-phosphate and glycerone phosphate from D-tagatose 6-phosphate: step 2/2. In terms of biological role, component of the tagatose-1,6-bisphosphate aldolase KbaYZ that is required for full activity and stability of the Y subunit. Could have a chaperone-like function for the proper and stable folding of KbaY. When expressed alone, KbaZ does not show any aldolase activity. In Escherichia coli O8 (strain IAI1), this protein is D-tagatose-1,6-bisphosphate aldolase subunit KbaZ.